A 397-amino-acid polypeptide reads, in one-letter code: Ethanolaminephosphotransferase 1 (397 aa).

The residue at position 2 (Ala2) is an N-acetylalanine. The next 10 helical transmembrane spans lie at Trp47–Ala69, His84–Leu103, Leu123–Gly145, Gly150–Trp172, Ile179–Ala201, Leu221–Phe243, Val256–Leu278, Val291–Cys310, Cys317–Ala339, and Ser344–Val366. Position 387 (Sec387) is a non-standard amino acid, selenocysteine.

Belongs to the CDP-alcohol phosphatidyltransferase class-I family. The cofactor is Mg(2+). Mn(2+) is required as a cofactor. In terms of tissue distribution, widely expressed. Abundant in brain, placenta, liver and pancreas, followed by heart, skeletal muscle, lung and kidney. In brain it is strongly expressed in cerebellum, followed by the occipital pole and the frontal lobe.

It is found in the endoplasmic reticulum membrane. It carries out the reaction CDP-ethanolamine + a 1,2-diacyl-sn-glycerol = a 1,2-diacyl-sn-glycero-3-phosphoethanolamine + CMP + H(+). The catalysed reaction is 1-O-alkyl-2-acyl-sn-glycerol + CDP-ethanolamine = a 1-O-alkyl-2-acyl-sn-glycero-3-phosphoethanolamine + CMP + H(+). It participates in phospholipid metabolism; phosphatidylethanolamine biosynthesis; phosphatidylethanolamine from ethanolamine: step 3/3. In terms of biological role, ethanolaminephosphotransferase that catalyzes the transfer of phosphoethanolamine (PE) from CDP-ethanolamine to lipid acceptors, the final step in the synthesis of PE via the 'Kennedy' pathway. PE is the second most abundant phospholipid of membranes in mammals and is involved in various membrane-related cellular processes. The enzyme is critical for the synthesis of several PE species and also catalyzes the synthesis of plasmanyl-PE, a lipid required for proper myelination and neurodevelopment, from 1-alkyl-2-acylglycerol. This Homo sapiens (Human) protein is Ethanolaminephosphotransferase 1.